The primary structure comprises 110 residues: Large ribosomal subunit protein uL22 (110 aa).

Belongs to the universal ribosomal protein uL22 family. Part of the 50S ribosomal subunit.

Functionally, this protein binds specifically to 23S rRNA; its binding is stimulated by other ribosomal proteins, e.g. L4, L17, and L20. It is important during the early stages of 50S assembly. It makes multiple contacts with different domains of the 23S rRNA in the assembled 50S subunit and ribosome. In terms of biological role, the globular domain of the protein is located near the polypeptide exit tunnel on the outside of the subunit, while an extended beta-hairpin is found that lines the wall of the exit tunnel in the center of the 70S ribosome. This is Large ribosomal subunit protein uL22 from Dichelobacter nodosus (strain VCS1703A).